The primary structure comprises 343 residues: Phosphate acyltransferase (343 aa).

Belongs to the PlsX family. Homodimer. Probably interacts with PlsY.

It localises to the cytoplasm. The enzyme catalyses a fatty acyl-[ACP] + phosphate = an acyl phosphate + holo-[ACP]. Its pathway is lipid metabolism; phospholipid metabolism. In terms of biological role, catalyzes the reversible formation of acyl-phosphate (acyl-PO(4)) from acyl-[acyl-carrier-protein] (acyl-ACP). This enzyme utilizes acyl-ACP as fatty acyl donor, but not acyl-CoA. This Coxiella burnetii (strain CbuG_Q212) (Coxiella burnetii (strain Q212)) protein is Phosphate acyltransferase.